The following is a 103-amino-acid chain: N(4)-acetylcytidine amidohydrolase (103 aa).

The ASCH domain occupies 6-94 (ITFFQRFQND…IAEIYPNQTQ (89 aa)). Lys-21 acts as the Proton acceptor in catalysis. Thr-24 functions as the Nucleophile in the catalytic mechanism. Glu-74 serves as the catalytic Proton donor.

The protein belongs to the N(4)-acetylcytidine amidohydrolase family.

The enzyme catalyses N(4)-acetylcytidine + H2O = cytidine + acetate + H(+). It catalyses the reaction N(4)-acetyl-2'-deoxycytidine + H2O = 2'-deoxycytidine + acetate + H(+). It carries out the reaction N(4)-acetylcytosine + H2O = cytosine + acetate + H(+). Its function is as follows. Catalyzes the hydrolysis of N(4)-acetylcytidine (ac4C). This is N(4)-acetylcytidine amidohydrolase (yqfB) from Salmonella heidelberg (strain SL476).